The following is a 95-amino-acid chain: Cerebratulus toxin A-III (95 aa).

Disulfide bonds link Cys-17-Cys-38, Cys-23-Cys-34, and Cys-48-Cys-61.

This sequence belongs to the worm cytolysin family.

The protein resides in the secreted. Functionally, permeabilizes a variety of cells. Forms large pores which allows the release of large proteins almost as rapidly as small organic molecules and inorganic ions. At sublytic concentrations, the toxin also inhibits protein kinase C and endogenous voltage-gated cation selective (sodium, calcium) channels occurring in the nervous and cardiovascular systems. The polypeptide is Cerebratulus toxin A-III (Cerebratulus lacteus (Milky ribbon worm)).